The chain runs to 699 residues: Dymeclin (699 aa).

The N-myristoyl glycine moiety is linked to residue Gly2. The residue at position 346 (Ser346) is a Phosphoserine.

Belongs to the dymeclin family.

In Drosophila melanogaster (Fruit fly), this protein is Dymeclin.